The sequence spans 122 residues: Large ribosomal subunit protein uL14 (122 aa).

The protein belongs to the universal ribosomal protein uL14 family. In terms of assembly, part of the 50S ribosomal subunit. Forms a cluster with proteins L3 and L19. In the 70S ribosome, L14 and L19 interact and together make contacts with the 16S rRNA in bridges B5 and B8.

Its function is as follows. Binds to 23S rRNA. Forms part of two intersubunit bridges in the 70S ribosome. In Shewanella halifaxensis (strain HAW-EB4), this protein is Large ribosomal subunit protein uL14.